A 578-amino-acid polypeptide reads, in one-letter code: A-type ATP synthase subunit A (578 aa).

ATP is bound at residue 228–235 (GPFGSGKT).

It belongs to the ATPase alpha/beta chains family. In terms of assembly, has multiple subunits with at least A(3), B(3), C, D, E, F, H, I and proteolipid K(x).

Its subcellular location is the cell membrane. The catalysed reaction is ATP + H2O + 4 H(+)(in) = ADP + phosphate + 5 H(+)(out). Component of the A-type ATP synthase that produces ATP from ADP in the presence of a proton gradient across the membrane. The A chain is the catalytic subunit. This Methanococcoides burtonii (strain DSM 6242 / NBRC 107633 / OCM 468 / ACE-M) protein is A-type ATP synthase subunit A.